Reading from the N-terminus, the 380-residue chain is Erythronate-4-phosphate dehydrogenase (380 aa).

The substrate site is built by S45 and T66. Residues 126–127 (QV), D146, T174, 205–207 (ASR), and D231 each bind NAD(+). R207 is an active-site residue. The active site involves E236. The active-site Proton donor is H253. G256 is a binding site for NAD(+). Y257 is a substrate binding site.

Belongs to the D-isomer specific 2-hydroxyacid dehydrogenase family. PdxB subfamily. In terms of assembly, homodimer.

It localises to the cytoplasm. It carries out the reaction 4-phospho-D-erythronate + NAD(+) = (R)-3-hydroxy-2-oxo-4-phosphooxybutanoate + NADH + H(+). Its pathway is cofactor biosynthesis; pyridoxine 5'-phosphate biosynthesis; pyridoxine 5'-phosphate from D-erythrose 4-phosphate: step 2/5. In terms of biological role, catalyzes the oxidation of erythronate-4-phosphate to 3-hydroxy-2-oxo-4-phosphonooxybutanoate. The protein is Erythronate-4-phosphate dehydrogenase of Pseudomonas syringae pv. syringae (strain B728a).